Here is a 786-residue protein sequence, read N- to C-terminus: Endonuclease MutS2 (786 aa).

335 to 342 (GPNTGGKT) serves as a coordination point for ATP. The Smr domain maps to 711–786 (LDLRGERFEN…GLGVTVVELK (76 aa)).

This sequence belongs to the DNA mismatch repair MutS family. MutS2 subfamily. In terms of assembly, homodimer. Binds to stalled ribosomes, contacting rRNA.

Functionally, endonuclease that is involved in the suppression of homologous recombination and thus may have a key role in the control of bacterial genetic diversity. In terms of biological role, acts as a ribosome collision sensor, splitting the ribosome into its 2 subunits. Detects stalled/collided 70S ribosomes which it binds and splits by an ATP-hydrolysis driven conformational change. Acts upstream of the ribosome quality control system (RQC), a ribosome-associated complex that mediates the extraction of incompletely synthesized nascent chains from stalled ribosomes and their subsequent degradation. Probably generates substrates for RQC. This Bacillus cereus (strain ATCC 10987 / NRS 248) protein is Endonuclease MutS2.